Reading from the N-terminus, the 361-residue chain is MSTLPEAKLDVLLAHHAALEAQLMAQVGAEDYVRITRELSELNPLVEAVKSYRQVRDELGEIDELLEDPATEPEMRAMAEAERDALDAHRDELIQQIRIALLPKDAMDERNVMLEIRAGTGGDEASLFAGDLFRMYEKFAALQGWSVEVISASEGTVGGYKEIIAEVKGRGAFAKLKFESGVHRVQRVPDTETQGRIHTSAATVAVLPEVEDVDVDIKQDDLRIETMRAQGAGGQHVNKTESAIRITHLPTGIVVMMQDSRSQHKNRASAMNILRSRIYDAEQQRLDAARSAERKAKVGSGDRSERIRTYNFPQGRVTDHRINLTLYKLPQVIAGEALGELIDALTTEHQAAQLAEQGNAA.

Position 235 is an N5-methylglutamine (Q235).

This sequence belongs to the prokaryotic/mitochondrial release factor family. Methylated by PrmC. Methylation increases the termination efficiency of RF1.

The protein localises to the cytoplasm. In terms of biological role, peptide chain release factor 1 directs the termination of translation in response to the peptide chain termination codons UAG and UAA. In Rhodopseudomonas palustris (strain ATCC BAA-98 / CGA009), this protein is Peptide chain release factor 1.